The chain runs to 129 residues: uncharacterized protein (129 aa).

Belongs to the asfivirus C129R family.

It localises to the virion. Functionally, plays a role in the inhibition of type I interferon signaling pathway. Mechanistically, specifically interacts with 2',3'-cGAMP and cleaves it via its phosphodiesterase activity. In turn, prevents 2',3'-cGAMP interaction with host ER-resident STING1 leading to inhibition of downstream signaling pathway and type I interferon production. This is an uncharacterized protein from African swine fever virus (strain Badajoz 1971 Vero-adapted) (Ba71V).